A 932-amino-acid polypeptide reads, in one-letter code: Alanine--tRNA ligase (932 aa).

Zn(2+) is bound by residues His-623, His-627, Cys-726, and His-730. Positions 893 to 916 are disordered; it reads RVGGGGGGPPDFAQGGGPDVDSLD. A compositionally biased stretch (gly residues) spans 894–910; the sequence is VGGGGGGPPDFAQGGGP.

Belongs to the class-II aminoacyl-tRNA synthetase family. Zn(2+) is required as a cofactor.

The protein resides in the cytoplasm. The enzyme catalyses tRNA(Ala) + L-alanine + ATP = L-alanyl-tRNA(Ala) + AMP + diphosphate. Its function is as follows. Catalyzes the attachment of alanine to tRNA(Ala) in a two-step reaction: alanine is first activated by ATP to form Ala-AMP and then transferred to the acceptor end of tRNA(Ala). Also edits incorrectly charged Ser-tRNA(Ala) and Gly-tRNA(Ala) via its editing domain. The protein is Alanine--tRNA ligase of Natronomonas pharaonis (strain ATCC 35678 / DSM 2160 / CIP 103997 / JCM 8858 / NBRC 14720 / NCIMB 2260 / Gabara) (Halobacterium pharaonis).